The primary structure comprises 235 residues: Probable pyridoxal 5'-phosphate synthase subunit PDX1 (235 aa).

Lys16 serves as the catalytic Schiff-base intermediate with D-ribose 5-phosphate. A D-glyceraldehyde 3-phosphate-binding site is contributed by Arg104. D-ribose 5-phosphate is bound by residues Gly153 and 174 to 175 (GS).

Belongs to the PdxS/SNZ family.

It catalyses the reaction aldehydo-D-ribose 5-phosphate + D-glyceraldehyde 3-phosphate + L-glutamine = pyridoxal 5'-phosphate + L-glutamate + phosphate + 3 H2O + H(+). The protein operates within cofactor biosynthesis; pyridoxal 5'-phosphate biosynthesis. Functionally, catalyzes the formation of pyridoxal 5'-phosphate from ribose 5-phosphate (RBP), glyceraldehyde 3-phosphate (G3P) and ammonia. The ammonia is provided by PDX2. Can also use ribulose 5-phosphate and dihydroxyacetone phosphate as substrates, resulting from enzyme-catalyzed isomerization of RBP and G3P, respectively. Also plays an indirect role in resistance to singlet oxygen-generating photosensitizers. This Stellaria longipes (Longstalk starwort) protein is Probable pyridoxal 5'-phosphate synthase subunit PDX1.